A 209-amino-acid chain; its full sequence is rRNA N(6)-adenosine-methyltransferase METTL5 (209 aa).

Residues Q28, T31, G59, C62, V64, D81, and 108–109 (DV) contribute to the S-adenosyl-L-methionine site.

This sequence belongs to the methyltransferase superfamily. PrmA family. Heterodimer; heterodimerizes with TRMT112. As to expression, ubiquitously expressed in brain.

Its subcellular location is the nucleus. It localises to the presynapse. The protein resides in the postsynapse. It carries out the reaction adenosine(1832) in 18S rRNA + S-adenosyl-L-methionine = N(6)-methyladenosine(1832) in 18S rRNA + S-adenosyl-L-homocysteine + H(+). With respect to regulation, rRNA N6-adenosine-methyltransferase activity is inhibited by zinc. Catalytic subunit of a heterodimer with TRMT112, which specifically methylates the 6th position of adenine in position 1832 of 18S rRNA. N6-methylation of adenine(1832) in 18S rRNA resides in the decoding center of 18S rRNA and is required for translation and embryonic stem cells (ESCs) pluripotency and differentiation. This is rRNA N(6)-adenosine-methyltransferase METTL5 from Mus musculus (Mouse).